Here is a 306-residue protein sequence, read N- to C-terminus: Curved DNA-binding protein (306 aa).

A J domain is found at 5–69 (DYYAIMGVKP…QRRAEYDQMW (65 aa)).

Its subcellular location is the cytoplasm. The protein localises to the nucleoid. Its function is as follows. DNA-binding protein that preferentially recognizes a curved DNA sequence. It is probably a functional analog of DnaJ; displays overlapping activities with DnaJ, but functions under different conditions, probably acting as a molecular chaperone in an adaptive response to environmental stresses other than heat shock. Lacks autonomous chaperone activity; binds native substrates and targets them for recognition by DnaK. Its activity is inhibited by the binding of CbpM. The polypeptide is Curved DNA-binding protein (Escherichia coli O7:K1 (strain IAI39 / ExPEC)).